The chain runs to 475 residues: 3-isopropylmalate dehydratase large subunit (475 aa).

[4Fe-4S] cluster-binding residues include C349, C409, and C412.

This sequence belongs to the aconitase/IPM isomerase family. LeuC type 1 subfamily. As to quaternary structure, heterodimer of LeuC and LeuD. Requires [4Fe-4S] cluster as cofactor.

The catalysed reaction is (2R,3S)-3-isopropylmalate = (2S)-2-isopropylmalate. It participates in amino-acid biosynthesis; L-leucine biosynthesis; L-leucine from 3-methyl-2-oxobutanoate: step 2/4. In terms of biological role, catalyzes the isomerization between 2-isopropylmalate and 3-isopropylmalate, via the formation of 2-isopropylmaleate. This Cereibacter sphaeroides (strain KD131 / KCTC 12085) (Rhodobacter sphaeroides) protein is 3-isopropylmalate dehydratase large subunit.